A 387-amino-acid polypeptide reads, in one-letter code: S-adenosylmethionine synthase (387 aa).

H17 serves as a coordination point for ATP. D19 serves as a coordination point for Mg(2+). E45 provides a ligand contact to K(+). The L-methionine site is built by E58 and Q101. The segment at 101-111 (QSPDIAQGVDR) is flexible loop. Residues 168–170 (DAK), 234–235 (RF), D243, 249–250 (RK), A266, and K270 contribute to the ATP site. D243 is a binding site for L-methionine. K274 is a binding site for L-methionine.

It belongs to the AdoMet synthase family. In terms of assembly, homotetramer; dimer of dimers. Mg(2+) is required as a cofactor. K(+) serves as cofactor.

The protein resides in the cytoplasm. The enzyme catalyses L-methionine + ATP + H2O = S-adenosyl-L-methionine + phosphate + diphosphate. It functions in the pathway amino-acid biosynthesis; S-adenosyl-L-methionine biosynthesis; S-adenosyl-L-methionine from L-methionine: step 1/1. Catalyzes the formation of S-adenosylmethionine (AdoMet) from methionine and ATP. The overall synthetic reaction is composed of two sequential steps, AdoMet formation and the subsequent tripolyphosphate hydrolysis which occurs prior to release of AdoMet from the enzyme. In Bordetella bronchiseptica (strain ATCC BAA-588 / NCTC 13252 / RB50) (Alcaligenes bronchisepticus), this protein is S-adenosylmethionine synthase.